Reading from the N-terminus, the 77-residue chain is Large ribosomal subunit protein bL28 (77 aa).

Positions 1–25 (MARVCQVTGKAPMSGNNVSHANNKT) are disordered.

The protein belongs to the bacterial ribosomal protein bL28 family.

In Paraburkholderia xenovorans (strain LB400), this protein is Large ribosomal subunit protein bL28.